Consider the following 64-residue polypeptide: MPKMKTKSAAAKRFKTTKSGKIKRKQAYTSHLAPNKTTKQKRHLRKDGLVHKTDFKRIKQLIAK.

The segment covering 1-26 has biased composition (basic residues); that stretch reads MPKMKTKSAAAKRFKTTKSGKIKRKQ. A disordered region spans residues 1 to 46; that stretch reads MPKMKTKSAAAKRFKTTKSGKIKRKQAYTSHLAPNKTTKQKRHLRK.

It belongs to the bacterial ribosomal protein bL35 family.

The protein is Large ribosomal subunit protein bL35 of Mycoplasmoides gallisepticum (strain R(low / passage 15 / clone 2)) (Mycoplasma gallisepticum).